Here is a 274-residue protein sequence, read N- to C-terminus: NADPH-dependent 7-cyano-7-deazaguanine reductase (274 aa).

Residue 80-82 (VES) participates in substrate binding. 82–83 (SK) lines the NADPH pocket. Cys181 acts as the Thioimide intermediate in catalysis. Asp188 serves as the catalytic Proton donor. Residue 220–221 (HE) coordinates substrate. An NADPH-binding site is contributed by 249–250 (RG).

This sequence belongs to the GTP cyclohydrolase I family. QueF type 2 subfamily. In terms of assembly, homodimer.

It is found in the cytoplasm. It carries out the reaction 7-aminomethyl-7-carbaguanine + 2 NADP(+) = 7-cyano-7-deazaguanine + 2 NADPH + 3 H(+). The protein operates within tRNA modification; tRNA-queuosine biosynthesis. In terms of biological role, catalyzes the NADPH-dependent reduction of 7-cyano-7-deazaguanine (preQ0) to 7-aminomethyl-7-deazaguanine (preQ1). The polypeptide is NADPH-dependent 7-cyano-7-deazaguanine reductase (Paraburkholderia xenovorans (strain LB400)).